Here is a 176-residue protein sequence, read N- to C-terminus: Large ribosomal subunit protein uL6 (176 aa).

It belongs to the universal ribosomal protein uL6 family. As to quaternary structure, part of the 50S ribosomal subunit.

In terms of biological role, this protein binds to the 23S rRNA, and is important in its secondary structure. It is located near the subunit interface in the base of the L7/L12 stalk, and near the tRNA binding site of the peptidyltransferase center. The protein is Large ribosomal subunit protein uL6 of Burkholderia thailandensis (strain ATCC 700388 / DSM 13276 / CCUG 48851 / CIP 106301 / E264).